A 182-amino-acid polypeptide reads, in one-letter code: MSDLKTIAQPYAKAAFDFALANKSLDQWAYMLMTTAEVASQPVILQEIKEIDFKGAKNAEAFTQMFLDICEGLLDEHCQNFVRVMAENGRLIVLPDVLNLFMEMKADFERTIEATVLSVEPLTEEQKVNLVKALEKRLSRTVELDCQIDESLVGGMLIKAGELVIDGTLKSSINRLASSLQA.

Belongs to the ATPase delta chain family. F-type ATPases have 2 components, F(1) - the catalytic core - and F(0) - the membrane proton channel. F(1) has five subunits: alpha(3), beta(3), gamma(1), delta(1), epsilon(1). F(0) has three main subunits: a(1), b(2) and c(10-14). The alpha and beta chains form an alternating ring which encloses part of the gamma chain. F(1) is attached to F(0) by a central stalk formed by the gamma and epsilon chains, while a peripheral stalk is formed by the delta and b chains.

Its subcellular location is the cell inner membrane. F(1)F(0) ATP synthase produces ATP from ADP in the presence of a proton or sodium gradient. F-type ATPases consist of two structural domains, F(1) containing the extramembraneous catalytic core and F(0) containing the membrane proton channel, linked together by a central stalk and a peripheral stalk. During catalysis, ATP synthesis in the catalytic domain of F(1) is coupled via a rotary mechanism of the central stalk subunits to proton translocation. Functionally, this protein is part of the stalk that links CF(0) to CF(1). It either transmits conformational changes from CF(0) to CF(1) or is implicated in proton conduction. This Photobacterium profundum (strain SS9) protein is ATP synthase subunit delta 2.